We begin with the raw amino-acid sequence, 370 residues long: 3-isopropylmalate dehydrogenase (370 aa).

NAD(+) is bound at residue 77–90 (GPKWDGVPYEHRPE). Residues Arg-97, Arg-107, Arg-135, and Asp-226 each contribute to the substrate site. Asp-226, Asp-250, and Asp-254 together coordinate Mg(2+). NAD(+) is bound at residue 290-302 (GSAPDIAGKSIAN).

It belongs to the isocitrate and isopropylmalate dehydrogenases family. LeuB type 1 subfamily. Homodimer. It depends on Mg(2+) as a cofactor. Mn(2+) is required as a cofactor.

The protein resides in the cytoplasm. The catalysed reaction is (2R,3S)-3-isopropylmalate + NAD(+) = 4-methyl-2-oxopentanoate + CO2 + NADH. The protein operates within amino-acid biosynthesis; L-leucine biosynthesis; L-leucine from 3-methyl-2-oxobutanoate: step 3/4. Catalyzes the oxidation of 3-carboxy-2-hydroxy-4-methylpentanoate (3-isopropylmalate) to 3-carboxy-4-methyl-2-oxopentanoate. The product decarboxylates to 4-methyl-2 oxopentanoate. In Agrobacterium fabrum (strain C58 / ATCC 33970) (Agrobacterium tumefaciens (strain C58)), this protein is 3-isopropylmalate dehydrogenase (leuB).